The chain runs to 690 residues: Eukaryotic translation initiation factor 3 subunit B (690 aa).

Residues 1–11 (MAKKKSEEHSG) show a composition bias toward basic and acidic residues. The interval 1-36 (MAKKKSEEHSGADANDSDYTEEPNFDDPPNFVDNIS) is disordered. The segment covering 15 to 25 (NDSDYTEEPNF) has biased composition (acidic residues). Residues 57–141 (SVVVVDNMPK…YTFAVNLFTD (85 aa)) enclose the RRM domain. WD repeat units follow at residues 207–246 (TRERFTDTFVKWSPLGTYVVTFHKPGVAIWGGSSFQKIQK), 292–331 (GDGMSVLSMFRWSHDDKFVARMGENSIHIYETPSFYLLDL), 334–369 (IKIPGIRGFSWSPTDNVIAYWVEEQNQIPARVTLME), 442–484 (EIRE…KPSL), and 530–575 (PDHF…IRRT). Residues 614–645 (QKDRLRLTRASKELLEKRSQLRETFMEYRNKR) are a coiled coil.

Belongs to the eIF-3 subunit B family. As to quaternary structure, component of the eukaryotic translation initiation factor 3 (eIF-3) complex. The eIF-3 complex interacts with pix. Interacts with mxt.

It is found in the cytoplasm. Functionally, RNA-binding component of the eukaryotic translation initiation factor 3 (eIF-3) complex, which is involved in protein synthesis of a specialized repertoire of mRNAs and, together with other initiation factors, stimulates binding of mRNA and methionyl-tRNAi to the 40S ribosome. The eIF-3 complex specifically targets and initiates translation of a subset of mRNAs involved in cell proliferation. This is Eukaryotic translation initiation factor 3 subunit B from Drosophila virilis (Fruit fly).